Here is a 199-residue protein sequence, read N- to C-terminus: UPF0301 protein Anae109_0457 (199 aa).

Belongs to the UPF0301 (AlgH) family.

The chain is UPF0301 protein Anae109_0457 from Anaeromyxobacter sp. (strain Fw109-5).